The following is a 382-amino-acid chain: Alkanesulfonate monooxygenase (382 aa).

Belongs to the SsuD family.

The catalysed reaction is an alkanesulfonate + FMNH2 + O2 = an aldehyde + FMN + sulfite + H2O + 2 H(+). In terms of biological role, catalyzes the desulfonation of aliphatic sulfonates. This chain is Alkanesulfonate monooxygenase, found in Pseudomonas entomophila (strain L48).